Consider the following 473-residue polypeptide: Cysteine--tRNA ligase (473 aa).

Cys-29 is a binding site for Zn(2+). Positions 31–41 (ATVQSAPHIGH) match the 'HIGH' region motif. Positions 207, 232, and 236 each coordinate Zn(2+). The short motif at 263-267 (KMSKS) is the 'KMSKS' region element. ATP is bound at residue Lys-266.

This sequence belongs to the class-I aminoacyl-tRNA synthetase family. As to quaternary structure, monomer. The cofactor is Zn(2+).

Its subcellular location is the cytoplasm. The catalysed reaction is tRNA(Cys) + L-cysteine + ATP = L-cysteinyl-tRNA(Cys) + AMP + diphosphate. The protein is Cysteine--tRNA ligase of Corynebacterium kroppenstedtii (strain DSM 44385 / JCM 11950 / CIP 105744 / CCUG 35717).